The chain runs to 194 residues: Peptidyl-tRNA hydrolase (194 aa).

Tyrosine 16 contributes to the tRNA binding site. The active-site Proton acceptor is the histidine 21. TRNA contacts are provided by phenylalanine 67, asparagine 69, and asparagine 115.

It belongs to the PTH family. As to quaternary structure, monomer.

The protein localises to the cytoplasm. It catalyses the reaction an N-acyl-L-alpha-aminoacyl-tRNA + H2O = an N-acyl-L-amino acid + a tRNA + H(+). Its function is as follows. Hydrolyzes ribosome-free peptidyl-tRNAs (with 1 or more amino acids incorporated), which drop off the ribosome during protein synthesis, or as a result of ribosome stalling. In terms of biological role, catalyzes the release of premature peptidyl moieties from peptidyl-tRNA molecules trapped in stalled 50S ribosomal subunits, and thus maintains levels of free tRNAs and 50S ribosomes. The polypeptide is Peptidyl-tRNA hydrolase (Shigella boydii serotype 4 (strain Sb227)).